The chain runs to 476 residues: Probable cytosolic Fe-S cluster assembly factor GJ13047 (476 aa).

The [4Fe-4S] cluster site is built by Cys-23, Cys-68, Cys-71, Cys-74, Cys-187, Cys-243, Cys-395, and Cys-399.

It belongs to the NARF family.

In terms of biological role, component of the cytosolic iron-sulfur (Fe/S) protein assembly machinery. Required for maturation of extramitochondrial Fe/S proteins. In Drosophila virilis (Fruit fly), this protein is Probable cytosolic Fe-S cluster assembly factor GJ13047.